The chain runs to 646 residues: UvrABC system protein C (646 aa).

Positions 16–95 constitute a GIY-YIG domain; the sequence is VEPGVYRFRD…IKEFDPRFNV (80 aa). In terms of domain architecture, UVR spans 208–243; it reads DRFARALEQQMNAAAEQLDFERAARLRDDLSALKRA.

It belongs to the UvrC family. In terms of assembly, interacts with UvrB in an incision complex.

The protein resides in the cytoplasm. The UvrABC repair system catalyzes the recognition and processing of DNA lesions. UvrC both incises the 5' and 3' sides of the lesion. The N-terminal half is responsible for the 3' incision and the C-terminal half is responsible for the 5' incision. This Mycobacterium bovis (strain BCG / Pasteur 1173P2) protein is UvrABC system protein C.